A 339-amino-acid polypeptide reads, in one-letter code: Homeobox protein DBX2 (339 aa).

The homeobox DNA-binding region spans 186 to 245 (GILRRAVFSEDQRKALEKMFQKQKYISKTDRKKLAINLGLKESQVKIWFQNRRMKWRNSK). A disordered region spans residues 282–318 (VPQQHSSPRWRENSPEPSERLIQESSGAPPPEANSLQ). Basic and acidic residues predominate over residues 290–303 (RWRENSPEPSERLI).

Belongs to the H2.0 homeobox family.

Its subcellular location is the nucleus. The sequence is that of Homeobox protein DBX2 (DBX2) from Homo sapiens (Human).